The sequence spans 417 residues: Gamma-glutamyl phosphate reductase (417 aa).

The protein belongs to the gamma-glutamyl phosphate reductase family.

Its subcellular location is the cytoplasm. The catalysed reaction is L-glutamate 5-semialdehyde + phosphate + NADP(+) = L-glutamyl 5-phosphate + NADPH + H(+). Its pathway is amino-acid biosynthesis; L-proline biosynthesis; L-glutamate 5-semialdehyde from L-glutamate: step 2/2. Functionally, catalyzes the NADPH-dependent reduction of L-glutamate 5-phosphate into L-glutamate 5-semialdehyde and phosphate. The product spontaneously undergoes cyclization to form 1-pyrroline-5-carboxylate. The sequence is that of Gamma-glutamyl phosphate reductase from Haemophilus influenzae (strain PittGG).